A 236-amino-acid polypeptide reads, in one-letter code: 28 kDa antigen (236 aa).

An N-terminal signal peptide occupies residues 1 to 22; sequence MPNRRRCKLSTAISTVATLAIA. Residues 76–105 form a disordered region; sequence PVPSLTGTDDPGNGLRTPGLTSPDLTNQEL. Polar residues predominate over residues 94–105; it reads GLTSPDLTNQEL.

It to M.tuberculosis ERP.

The polypeptide is 28 kDa antigen (Mycobacterium leprae (strain TN)).